A 1788-amino-acid chain; its full sequence is MSSLASQLAQIAANSRSTLNTKVLKAAHSKSLIFEPRVAATQTYPEIYSICLEGFEELCNLDSRFTKFTQSLWSPQSQEADRTQMSAAENAALDKHVEAFLHLCGSRLRLMPTIKAIEWLIRRFRVHEFNTAALIATFLPYHTIPAFVTLLSILPANIPKEYRFLDPYIRSLTAPPRAAIVQQATNRPELLTAISQYTLDSCKYQMEYPGLISFWGGVMVEATNGLLDKYRSGRRSIQIENDNALMQQLGPVLSDAMVMKSSPGLQIASYMVVTILAAKGGLADNALTAFMDQLVHGWTPETMRPGLVTLCIISQHRSAKQLSARVTKALLKVPEVASVMNEIGKDHRVDKLANGLALALVDRLHKKGDVRSLPVVNSLLLGNVLREKQIKVVYKSLLVAAHRINDQVDQDGAIRKELGTVLVSLSQAGGEVGDIVRATIDEVDFDIDALELTLGASIRPKLAVEDAPEAAAEDNNTPKVDKEAQVAQNFEKLSKLKPQTASCFAEEPLDLLEELYSLFLSVAANESNLQKFDEAPVLSRPQAPTKLFYASFYMRLWCGSLPTLAKVAALDRVKNLLKDEEFATLDFQAVVPYAIVALSDPAKKVRRAAAELVTVLGSFYETKPSKARRVWGSEGLYAKNAAVNWLDFDATKSLIHSVLIPSLEESILHEDHILAALTNALESSKSKDGDKKHLSHSTRFAIFKFLSSHVVGTPLIAVKLRLLQSLNQIKSISGTSRTDLLLSLLQWWARLSEAEAQQLLAREAVDEASVNNAFVDVVIANNEAGLRLIFELIRDSNVITRNGLVQSLFSRVQKIWSSMKAETQFSTARALLTLSQAVHPTSSEPDVIATEATDVLHKVELTTDILLDFLESLYDDIKKATEKPATKRRRVGSSEKSVDSQSPADVSASLSKATFVLELVQESEPAKHPELLPSLFTTLSELQHLRTVVGSELGYLQSLVLSSLLAMMPAYKDSKELTIDPAAGHGDILASCIQRSSSPTVINAALLLVASLARTAPDVVLHSVMPIFTFMGSSVLKQADDYSAHVVNQTVKEVIPPLIETFRKSRRNLVASTAELLTSFVVAYEHIPSHRKQDLFITLIENLGPEDFLFAVLAMFVDKYGATDNMLAFTTQIIGSFSVEIQLQTLIKHLDLISDIFKPKPVLSAALLAKVDSNSEQDVVKLATKQLTLLPKLLVNRRLRHEISGLAEKDDMESVKIRELYAQLLEGVLTLAGTVKPKKDTLYTRCAEALSNLLNLLSIAEFIKSVEALLDRPNVILRQKVLRALERRVDSESINNPKSREALLAFLPQLTAVIRESDDMNYKHTAVNCVDKIAEKYGKKDLDAVAAAAATIAGDSCLGQPSQELRVMALLCLASLVDVLQDAIVPVLPIAIPKALGCLEESIKAEKPDGALHNAAYAFMAALAQHIPYMISGAYLDRLLVCSNASAAAGLNEECRDSRTDCLQFVAKLIEGKVLFTALEKNWANAASSGYLALEEYLHVLGTALDKHPKSSIAKNTTLFTGIFLNAFDLRRSGVLSSTQELEKIELLINETSLKMIYKLNDAAFRPMFSHLMEWSTTGLPKSDLAGKAQRQVSTYGFLQHFFENLKSIVTSYASYIIDSAVKILSAPLTSDDVLKTLRSRVLRTLTKCFEHDQDGFWQAPAHFNAVAPVLVAQFGHAAGADNCTNDLVLAVVELAAAADSKEHHKEINSALLKHLRSEQAAVRLAVIKCEQELTARLGEEWLQSLPEMLPFISELQDDDDEVVERENRRWIVGIEETLGESLDNMLQ.

An HEAT 1 repeat occupies 585-622; the sequence is LDFQAVVPYAIVALSDPAKKVRRAAAELVTVLGSFYET. Residues 884–905 are disordered; it reads PATKRRRVGSSEKSVDSQSPAD. HEAT repeat units follow at residues 926 to 962, 1049 to 1086, 1257 to 1294, 1301 to 1339, 1703 to 1740, and 1744 to 1781; these read AKHPELLPSLFTTLSELQHLRTVVGSELGYLQSLVLS, QTVKEVIPPLIETFRKSRRNLVASTAELLTSFVVAYEH, LSIAEFIKSVEALLDRPNVILRQKVLRALERRVDSESI, EALLAFLPQLTAVIRESDDMNYKHTAVNCVDKIAEKYGK, EHHKEINSALLKHLRSEQAAVRLAVIKCEQELTARLGE, and QSLPEMLPFISELQDDDDEVVERENRRWIVGIEETLGE.

This sequence belongs to the HEATR1/UTP10 family. Component of the ribosomal small subunit (SSU) processome.

The protein localises to the nucleus. Its subcellular location is the nucleolus. Its function is as follows. Involved in nucleolar processing of pre-18S ribosomal RNA. Involved in ribosome biosynthesis. The chain is U3 small nucleolar RNA-associated protein 10 (rbg-5) from Neurospora crassa (strain ATCC 24698 / 74-OR23-1A / CBS 708.71 / DSM 1257 / FGSC 987).